Consider the following 693-residue polypeptide: Elongation factor G (693 aa).

One can recognise a tr-type G domain in the interval 8–282 (KNTRNIGIMA…AVIDYLPSPL (275 aa)). Residues 17-24 (AHIDAGKT), 81-85 (DTPGH), and 135-138 (NKMD) contribute to the GTP site.

The protein belongs to the TRAFAC class translation factor GTPase superfamily. Classic translation factor GTPase family. EF-G/EF-2 subfamily.

Its subcellular location is the cytoplasm. Functionally, catalyzes the GTP-dependent ribosomal translocation step during translation elongation. During this step, the ribosome changes from the pre-translocational (PRE) to the post-translocational (POST) state as the newly formed A-site-bound peptidyl-tRNA and P-site-bound deacylated tRNA move to the P and E sites, respectively. Catalyzes the coordinated movement of the two tRNA molecules, the mRNA and conformational changes in the ribosome. The protein is Elongation factor G of Staphylococcus intermedius.